The following is a 500-amino-acid chain: NAD(P)H-quinone oxidoreductase chain 4, chloroplastic (500 aa).

15 helical membrane passes run 4-24 (FPWLTIIVILPIFAGSLIFFL), 35-55 (YTIFICIFELLLTAYTFCYHF), 87-107 (IGPILLTGFITTLATLAAWPV), 113-130 (LFNFLMLAMYSAQIGLFS), 134-154 (LLLFFIMWELELIPVYLLLSM), 167-187 (FILYTAGGSIFLLMGVLGIGL), 211-231 (IIFYIGFFIAFAVKLPIIPLH), 242-262 (HYSTCMLLAGILLKMGAYGLV), 272-292 (AHSIFSPWLLIVGTIQIIYAA), 305-325 (IAYSSVSHMGFIIIGIGSITD), 330-350 (GALLQIISHGFIGAALFFLAG), 364-384 (MGGIAILMPKIFTIFSTFSMA), 386-406 (LALPGMSGFVAELIVFFGIIT), 416-436 (ILITFVMAIGMILTPIYSLSM), and 463-483 (FLSISLFLPVLGIGMYPDFIF).

It belongs to the complex I subunit 4 family.

Its subcellular location is the plastid. It is found in the chloroplast thylakoid membrane. The enzyme catalyses a plastoquinone + NADH + (n+1) H(+)(in) = a plastoquinol + NAD(+) + n H(+)(out). The catalysed reaction is a plastoquinone + NADPH + (n+1) H(+)(in) = a plastoquinol + NADP(+) + n H(+)(out). The sequence is that of NAD(P)H-quinone oxidoreductase chain 4, chloroplastic from Coffea arabica (Arabian coffee).